A 208-amino-acid chain; its full sequence is MAYVNEQNPQFLLYNGMHNQTHSTPQYHNHHHHHHQSPTYPQSYFNPYSHQSYQQHHLNSDVNFQMVPQSTSVPPDPFCSIEPMETNVQAKEQILEEIVRECEEIERRSNSSASPASNWSSDEHDSQSEKSYHPYKTPEKKERKKAQNRLAATRYREKKRREKEEAMTCIEGLSVTNGKLKDQVSELEREIRYFKKFMTEMGMKTVTD.

2 disordered regions span residues 18-47 (HNQTHSTPQYHNHHHHHHQSPTYPQSYFNP) and 106-165 (ERRS…EKEE). Residues 110 to 120 (NSSASPASNWS) show a composition bias toward low complexity. Residues 121 to 141 (SDEHDSQSEKSYHPYKTPEKK) show a composition bias toward basic and acidic residues. One can recognise a bZIP domain in the interval 138–201 (PEKKERKKAQ…RYFKKFMTEM (64 aa)). Residues 140–163 (KKERKKAQNRLAATRYREKKRREK) form a basic motif region. The interval 173–187 (LSVTNGKLKDQVSEL) is leucine-zipper.

This sequence belongs to the bZIP family.

It is found in the nucleus. In terms of biological role, transcription factor. Involved in positively modulating longevity and stress tolerance, probably acting by positively regulating expression of transsulfuration enzyme cth-2, leading to increased hydrogen sulfide production and therefore increased protein persulfidation, a protective modification of redox-reactive cysteines. May mediate longevity and increased stress resistance induced by mTORC1 suppression. The chain is Transcription factor atf-4 homolog from Caenorhabditis elegans.